Consider the following 421-residue polypeptide: UDP-N-acetylglucosamine 1-carboxyvinyltransferase (421 aa).

22-23 is a binding site for phosphoenolpyruvate; the sequence is KN. Position 93 (Arg-93) interacts with UDP-N-acetyl-alpha-D-glucosamine. Cys-117 (proton donor) is an active-site residue. Cys-117 carries the 2-(S-cysteinyl)pyruvic acid O-phosphothioketal modification. Residues 122–126, Asp-308, and Val-330 contribute to the UDP-N-acetyl-alpha-D-glucosamine site; that span reads RPVDL.

Belongs to the EPSP synthase family. MurA subfamily.

It is found in the cytoplasm. It catalyses the reaction phosphoenolpyruvate + UDP-N-acetyl-alpha-D-glucosamine = UDP-N-acetyl-3-O-(1-carboxyvinyl)-alpha-D-glucosamine + phosphate. Its pathway is cell wall biogenesis; peptidoglycan biosynthesis. Cell wall formation. Adds enolpyruvyl to UDP-N-acetylglucosamine. The protein is UDP-N-acetylglucosamine 1-carboxyvinyltransferase of Azotobacter vinelandii (strain DJ / ATCC BAA-1303).